The chain runs to 338 residues: Holliday junction branch migration complex subunit RuvB (338 aa).

Positions 1–14 (MENDHGILSDHPSG) are enriched in basic and acidic residues. The segment at 1-21 (MENDHGILSDHPSGEEESQVE) is disordered. The interval 3 to 185 (NDHGILSDHP…FGIVEHMNYY (183 aa)) is large ATPase domain (RuvB-L). Residues Leu24, Arg25, Gly66, Lys69, Thr70, Thr71, 132–134 (EDY), Arg175, Tyr185, and Arg222 each bind ATP. Thr70 serves as a coordination point for Mg(2+). Positions 186–256 (TQDELTKIIF…IVKQALSLLQ (71 aa)) are small ATPAse domain (RuvB-S). Residues 259–338 (DRGLDEIDRK…LGIEYPTDKN (80 aa)) form a head domain (RuvB-H) region. DNA is bound by residues Arg314 and Arg319.

Belongs to the RuvB family. Homohexamer. Forms an RuvA(8)-RuvB(12)-Holliday junction (HJ) complex. HJ DNA is sandwiched between 2 RuvA tetramers; dsDNA enters through RuvA and exits via RuvB. An RuvB hexamer assembles on each DNA strand where it exits the tetramer. Each RuvB hexamer is contacted by two RuvA subunits (via domain III) on 2 adjacent RuvB subunits; this complex drives branch migration. In the full resolvosome a probable DNA-RuvA(4)-RuvB(12)-RuvC(2) complex forms which resolves the HJ.

It localises to the cytoplasm. The catalysed reaction is ATP + H2O = ADP + phosphate + H(+). Its function is as follows. The RuvA-RuvB-RuvC complex processes Holliday junction (HJ) DNA during genetic recombination and DNA repair, while the RuvA-RuvB complex plays an important role in the rescue of blocked DNA replication forks via replication fork reversal (RFR). RuvA specifically binds to HJ cruciform DNA, conferring on it an open structure. The RuvB hexamer acts as an ATP-dependent pump, pulling dsDNA into and through the RuvAB complex. RuvB forms 2 homohexamers on either side of HJ DNA bound by 1 or 2 RuvA tetramers; 4 subunits per hexamer contact DNA at a time. Coordinated motions by a converter formed by DNA-disengaged RuvB subunits stimulates ATP hydrolysis and nucleotide exchange. Immobilization of the converter enables RuvB to convert the ATP-contained energy into a lever motion, pulling 2 nucleotides of DNA out of the RuvA tetramer per ATP hydrolyzed, thus driving DNA branch migration. The RuvB motors rotate together with the DNA substrate, which together with the progressing nucleotide cycle form the mechanistic basis for DNA recombination by continuous HJ branch migration. Branch migration allows RuvC to scan DNA until it finds its consensus sequence, where it cleaves and resolves cruciform DNA. The sequence is that of Holliday junction branch migration complex subunit RuvB from Limosilactobacillus reuteri (strain DSM 20016) (Lactobacillus reuteri).